The chain runs to 214 residues: Endothelial cell-specific chemotaxis regulator (214 aa).

A signal peptide spans 1 to 18; sequence MRLGSAILGLLLLQGYSS. At 19–130 the chain is on the extracellular side; the sequence is QPTTTQTSQE…PTPTSESVLT (112 aa). Positions 23–107 are disordered; sequence TQTSQEILQK…DATPSPETTS (85 aa). A compositionally biased stretch (polar residues) spans 28–57; the sequence is EILQKSSQVSLVSNQPVTPRSSTMDKQSLS. The span at 80 to 90 shows a compositional bias: low complexity; the sequence is RSSSSSSSSSS. The chain crosses the membrane as a helical span at residues 131–151; it reads VAAFGVISFIVILVVVVIILV. The Cytoplasmic portion of the chain corresponds to 152–214; the sequence is SVVSLRFKCR…KGSMSAEKIL (63 aa). A disordered region spans residues 163–184; sequence NKESEDPQKPGSSGLSESCSTA. Polar residues predominate over residues 172–184; it reads PGSSGLSESCSTA. Phosphoserine is present on residues Ser204 and Ser207.

The protein belongs to the ECSCR family. In terms of assembly, interacts with FLNA. Interacts with the 20S proteasome subunit PSMA7. May be heavily O-glycosylated. In terms of tissue distribution, expressed in all tissues examined, highest expression was observed in lung and spleen endothelial cells.

It localises to the cell membrane. Its subcellular location is the cytoplasm. In terms of biological role, regulates endothelial chemotaxis and tube formation. Has a role in angiogenesis and apoptosis via modulation of the actin cytoskeleton and facilitation of proteasomal degradation of the apoptosis inhibitors BIRC3/IAP1 and BIRC2/IAP2. This Mus musculus (Mouse) protein is Endothelial cell-specific chemotaxis regulator (Ecscr).